The primary structure comprises 270 residues: Formamidopyrimidine-DNA glycosylase (270 aa).

The Schiff-base intermediate with DNA role is filled by Pro2. The active-site Proton donor is the Glu3. Lys58 acts as the Proton donor; for beta-elimination activity in catalysis. Positions 91, 110, and 151 each coordinate DNA. The FPG-type zinc-finger motif lies at 236–270 (FVYGRGGQPCKVCGTELREVKLGQRASVFCPKCQR). Residue Arg260 is the Proton donor; for delta-elimination activity of the active site.

It belongs to the FPG family. Monomer. Requires Zn(2+) as cofactor.

It carries out the reaction Hydrolysis of DNA containing ring-opened 7-methylguanine residues, releasing 2,6-diamino-4-hydroxy-5-(N-methyl)formamidopyrimidine.. It catalyses the reaction 2'-deoxyribonucleotide-(2'-deoxyribose 5'-phosphate)-2'-deoxyribonucleotide-DNA = a 3'-end 2'-deoxyribonucleotide-(2,3-dehydro-2,3-deoxyribose 5'-phosphate)-DNA + a 5'-end 5'-phospho-2'-deoxyribonucleoside-DNA + H(+). Functionally, involved in base excision repair of DNA damaged by oxidation or by mutagenic agents. Acts as a DNA glycosylase that recognizes and removes damaged bases. Has a preference for oxidized purines, such as 7,8-dihydro-8-oxoguanine (8-oxoG). Has AP (apurinic/apyrimidinic) lyase activity and introduces nicks in the DNA strand. Cleaves the DNA backbone by beta-delta elimination to generate a single-strand break at the site of the removed base with both 3'- and 5'-phosphates. This Pseudomonas entomophila (strain L48) protein is Formamidopyrimidine-DNA glycosylase.